A 483-amino-acid polypeptide reads, in one-letter code: Membrane-bound lytic murein transglycosylase F (483 aa).

Residues 1–18 (MKGLIARFIAGFALLLWA) form the signal peptide. A non-LT domain region spans residues 19–267 (WDMVFPWQQL…RIEEKYFNHL (249 aa)). Residues 269–483 (HFDYVDIQSY…SKESDSTLKE (215 aa)) form an LT domain region. Glu-312 is an active-site residue. Residues 458–483 (QQIQNNEEQPSVPQEISKESDSTLKE) form a disordered region. The span at 473–483 (ISKESDSTLKE) shows a compositional bias: basic and acidic residues.

The protein in the N-terminal section; belongs to the bacterial solute-binding protein 3 family. It in the C-terminal section; belongs to the transglycosylase Slt family.

It is found in the cell outer membrane. The catalysed reaction is Exolytic cleavage of the (1-&gt;4)-beta-glycosidic linkage between N-acetylmuramic acid (MurNAc) and N-acetylglucosamine (GlcNAc) residues in peptidoglycan, from either the reducing or the non-reducing ends of the peptidoglycan chains, with concomitant formation of a 1,6-anhydrobond in the MurNAc residue.. Murein-degrading enzyme that degrades murein glycan strands and insoluble, high-molecular weight murein sacculi, with the concomitant formation of a 1,6-anhydromuramoyl product. Lytic transglycosylases (LTs) play an integral role in the metabolism of the peptidoglycan (PG) sacculus. Their lytic action creates space within the PG sacculus to allow for its expansion as well as for the insertion of various structures such as secretion systems and flagella. The polypeptide is Membrane-bound lytic murein transglycosylase F (Actinobacillus pleuropneumoniae serotype 5b (strain L20)).